Consider the following 202-residue polypeptide: Small ribosomal subunit protein uS4 (202 aa).

The segment at 16 to 42 (GELPGLSRKNPRRAYPPGQHGQARKKR) is disordered. The region spanning 90 to 151 (MRLDNTVFRL…QERSRRLVEA (62 aa)) is the S4 RNA-binding domain.

This sequence belongs to the universal ribosomal protein uS4 family. Part of the 30S ribosomal subunit. Contacts protein S5. The interaction surface between S4 and S5 is involved in control of translational fidelity.

In terms of biological role, one of the primary rRNA binding proteins, it binds directly to 16S rRNA where it nucleates assembly of the body of the 30S subunit. Functionally, with S5 and S12 plays an important role in translational accuracy. The chain is Small ribosomal subunit protein uS4 from Rippkaea orientalis (strain PCC 8801 / RF-1) (Cyanothece sp. (strain PCC 8801)).